We begin with the raw amino-acid sequence, 376 residues long: Cytoplasmic tRNA 2-thiolation protein 1 (376 aa).

It belongs to the TtcA family. CTU1/NCS6/ATPBD3 subfamily.

It localises to the cytoplasm. Its pathway is tRNA modification; 5-methoxycarbonylmethyl-2-thiouridine-tRNA biosynthesis. Its function is as follows. Plays a central role in 2-thiolation of mcm(5)S(2)U at tRNA wobble positions of tRNA(Lys), tRNA(Glu) and tRNA(Gln). Directly binds tRNAs and probably acts by catalyzing adenylation of tRNAs, an intermediate required for 2-thiolation. It is unclear whether it acts as a sulfurtransferase that transfers sulfur from thiocarboxylated URM1 onto the uridine of tRNAs at wobble position. Prior mcm(5) tRNA modification by the elongator complex is required for 2-thiolation. May also be involved in protein urmylation. In Scheffersomyces stipitis (strain ATCC 58785 / CBS 6054 / NBRC 10063 / NRRL Y-11545) (Yeast), this protein is Cytoplasmic tRNA 2-thiolation protein 1.